The following is a 201-amino-acid chain: Dermatopontin (201 aa).

The N-terminal stretch at 1–18 (MDLTLLWVLLPLVTTAWG) is a signal peptide. Gln-19 is subject to Pyrrolidone carboxylic acid. A 2 X 53-55 AA tandem repeats region spans residues 19–186 (QYGGYGYPYQ…AVERDRQWKF (168 aa)). Sulfotyrosine is present on Tyr-23. Tandem repeats lie at residues 26–79 (PYQQ…ACMP), 70–75 (DRQWNY), 80–135 (TPQS…CCRY), and 125–130 (DREWQF). 5 cysteine pairs are disulfide-bonded: Cys-50–Cys-77, Cys-90–Cys-132, Cys-106–Cys-133, Cys-139–Cys-196, and Cys-143–Cys-189. A 3 X 6 AA tandem repeats of D-R-[EQ]-W-[NQK]-[FY] region spans residues 70–186 (DRQWNYACMP…AVERDRQWKF (117 aa)). Tyr-162, Tyr-164, and Tyr-167 each carry sulfotyrosine. Residues 181–186 (DRQWKF) form a 2-3 repeat. Tyr-194 is modified (sulfotyrosine).

It belongs to the dermatopontin family. Interacts with TGFB1, DCN and collagen. In terms of processing, sulfated on tyrosine residue(s).

It localises to the secreted. Its subcellular location is the extracellular space. The protein resides in the extracellular matrix. Functionally, seems to mediate adhesion by cell surface integrin binding. May serve as a communication link between the dermal fibroblast cell surface and its extracellular matrix environment. Enhances TGFB1 activity. Inhibits cell proliferation. Accelerates collagen fibril formation, and stabilizes collagen fibrils against low-temperature dissociation. This is Dermatopontin (Dpt) from Mus musculus (Mouse).